The following is a 138-amino-acid chain: Acidic phospholipase A2 Tbo-E6 (138 aa).

A signal peptide spans Met1–Gly16. 7 disulfides stabilise this stretch: Cys42/Cys131, Cys44/Cys60, Cys59/Cys111, Cys65/Cys138, Cys66/Cys104, Cys73/Cys97, and Cys91/Cys102. Ca(2+) is bound by residues Tyr43, Gly45, and Gly47. The active site involves His63. Residue Asp64 participates in Ca(2+) binding. The active site involves Asp105.

Monomer. Ca(2+) serves as cofactor. As to expression, expressed by the venom gland.

The protein localises to the secreted. The catalysed reaction is a 1,2-diacyl-sn-glycero-3-phosphocholine + H2O = a 1-acyl-sn-glycero-3-phosphocholine + a fatty acid + H(+). Snake venom phospholipase A2 (PLA2) that impairs hemostasis. It weakly inhibits ADP-induced platelet aggregation when tested on platelet rich plasma from human and rabbit blood (15-25% of inhibition at 5-10 ug of enzyme), and dose-dependently inhibits blood coagulation, possibly by inhibiting thrombin activation. Exhibits high hydrolytic activities toward L-dipalmitoyl phosphatidylcholine. PLA2 catalyzes the calcium-dependent hydrolysis of the 2-acyl groups in 3-sn-phosphoglycerides. In Craspedocephalus borneensis (Borneo pit viper), this protein is Acidic phospholipase A2 Tbo-E6.